Here is a 494-residue protein sequence, read N- to C-terminus: Nuclear distribution protein PAC1 (494 aa).

The 33-residue stretch at 14 to 46 folds into the LisH domain; it reads QKNELDKSVLRYLNWNYKQTVRHEHAQDYESVR. Residues 90–123 are a coiled coil; the sequence is NSIVRLQKKIIELEQNTETLVSQIKDLNTQVSEL. WD repeat units follow at residues 153-192, 196-244, 251-292, 295-334, 347-395, 415-454, and 457-492; these read NVESSVTSVKLHPNLPIVFVATDHGKLYAFDLFNYTIPLA, SHTK…CKFQ, GHEH…SLKT, PHSQWVRSIDVLGDYIISGSHDTTLRLTHWPSGNGLSVGT, HFIE…LMAH, GHLSWVRDISIRGQYLFSCADDKSVRCWDLNTGQCLHVWE, and HTGFVNCLDLDVDFDSNVTPRQMMVTGGLDCKSNVF.

The protein belongs to the WD repeat LIS1/nudF family. In terms of assembly, self-associates. Interacts with NDL1 and dynein.

Its subcellular location is the cytoplasm. It localises to the cytoskeleton. It is found in the spindle pole. Positively regulates the activity of the minus-end directed microtubule motor protein dynein. Plays a central role in positioning the mitotic spindle at the bud neck during cell division. Targets cytoplasmic dynein to microtubule plus ends, thereby promoting dynein-mediated microtubule sliding along the bud cortex and consequently the movement of the mitotic spindle to the bud neck. This chain is Nuclear distribution protein PAC1, found in Saccharomyces cerevisiae (strain Lalvin EC1118 / Prise de mousse) (Baker's yeast).